A 290-amino-acid chain; its full sequence is Oxaloacetate decarboxylase 2 (290 aa).

Ser50 serves as a coordination point for substrate. Residue Asp88 participates in Mg(2+) binding. The substrate site is built by Arg159 and His235.

The protein belongs to the isocitrate lyase/PEP mutase superfamily. Oxaloacetate decarboxylase family. In terms of assembly, homotetramer; dimer of dimers. Requires Mg(2+) as cofactor.

The enzyme catalyses oxaloacetate + H(+) = pyruvate + CO2. Catalyzes the decarboxylation of oxaloacetate into pyruvate. Seems to play a role in maintaining cellular concentrations of bicarbonate and pyruvate. In Pseudomonas fluorescens (strain Pf0-1), this protein is Oxaloacetate decarboxylase 2.